We begin with the raw amino-acid sequence, 621 residues long: Anthranilate synthase alpha subunit 2, chloroplastic (621 aa).

The transit peptide at 1-87 (MSAVSISAVK…SEEQFTKFKK (87 aa)) directs the protein to the chloroplast.

It belongs to the anthranilate synthase component I family. As to quaternary structure, heterotetramer consisting of two non-identical subunits: a beta subunit and a large alpha subunit.

It localises to the plastid. The protein localises to the chloroplast. It catalyses the reaction chorismate + L-glutamine = anthranilate + pyruvate + L-glutamate + H(+). The protein operates within amino-acid biosynthesis; L-tryptophan biosynthesis; L-tryptophan from chorismate: step 1/5. Feedback inhibition by tryptophan. Its function is as follows. Part of a heterotetrameric complex that catalyzes the two-step biosynthesis of anthranilate, an intermediate in the biosynthesis of L-tryptophan. In the first step, the glutamine-binding beta subunit of anthranilate synthase (AS) provides the glutamine amidotransferase activity which generates ammonia as a substrate that, along with chorismate, is used in the second step, catalyzed by the large alpha subunit of AS to produce anthranilate. This Arabidopsis thaliana (Mouse-ear cress) protein is Anthranilate synthase alpha subunit 2, chloroplastic (ASA2).